Here is a 331-residue protein sequence, read N- to C-terminus: Ribosomal RNA small subunit methyltransferase H (331 aa).

S-adenosyl-L-methionine contacts are provided by residues 38 to 40 (GGY), aspartate 56, phenylalanine 83, aspartate 100, and glutamine 107. Residues 289-331 (AELAENPRARSARLRVGVRTDAPAGKVDPQALGTPLIPKKGRR) form a disordered region.

This sequence belongs to the methyltransferase superfamily. RsmH family.

The protein resides in the cytoplasm. The catalysed reaction is cytidine(1402) in 16S rRNA + S-adenosyl-L-methionine = N(4)-methylcytidine(1402) in 16S rRNA + S-adenosyl-L-homocysteine + H(+). Functionally, specifically methylates the N4 position of cytidine in position 1402 (C1402) of 16S rRNA. This Cereibacter sphaeroides (strain ATCC 17029 / ATH 2.4.9) (Rhodobacter sphaeroides) protein is Ribosomal RNA small subunit methyltransferase H.